The chain runs to 807 residues: Glycerol-3-phosphate acyltransferase (807 aa).

Residues 305 to 310 (CHRSHM) carry the HXXXXD motif motif.

Belongs to the GPAT/DAPAT family.

Its subcellular location is the cell inner membrane. It carries out the reaction sn-glycerol 3-phosphate + an acyl-CoA = a 1-acyl-sn-glycero-3-phosphate + CoA. It participates in phospholipid metabolism; CDP-diacylglycerol biosynthesis; CDP-diacylglycerol from sn-glycerol 3-phosphate: step 1/3. The protein is Glycerol-3-phosphate acyltransferase of Vibrio atlanticus (strain LGP32) (Vibrio splendidus (strain Mel32)).